The chain runs to 156 residues: Ribosomal RNA large subunit methyltransferase H (156 aa).

Residues L73, G104, and 123-128 (LSPLTF) each bind S-adenosyl-L-methionine.

The protein belongs to the RNA methyltransferase RlmH family. In terms of assembly, homodimer.

Its subcellular location is the cytoplasm. It carries out the reaction pseudouridine(1915) in 23S rRNA + S-adenosyl-L-methionine = N(3)-methylpseudouridine(1915) in 23S rRNA + S-adenosyl-L-homocysteine + H(+). Functionally, specifically methylates the pseudouridine at position 1915 (m3Psi1915) in 23S rRNA. In Thioalkalivibrio sulfidiphilus (strain HL-EbGR7), this protein is Ribosomal RNA large subunit methyltransferase H.